A 137-amino-acid chain; its full sequence is Hemoglobin subunit alpha-2 (137 aa).

A Globin domain is found at 1 to 137 (DDRSHILAIW…VGGSLTSKYR (137 aa)). An O2-binding site is contributed by His54. His83 is a binding site for heme b.

Belongs to the globin family. The N-terminus of the mature protein is acetylated. Red blood cells.

The chain is Hemoglobin subunit alpha-2 from Telmatobius peruvianus (Andean frog).